The chain runs to 176 residues: Isopentenyl-diphosphate Delta-isomerase 1 (176 aa).

The Mn(2+) site is built by H23 and H30. One can recognise a Nudix hydrolase domain in the interval 28–162; it reads HLHRAFSCFI…EEFCTPWFKK (135 aa). Residue C65 is part of the active site. C65 provides a ligand contact to Mg(2+). H67 is a binding site for Mn(2+). E85 contributes to the Mg(2+) binding site. E112 and E114 together coordinate Mn(2+). E114 is a catalytic residue.

It belongs to the IPP isomerase type 1 family. In terms of assembly, homodimer. Mg(2+) is required as a cofactor. Requires Mn(2+) as cofactor.

Its subcellular location is the cytoplasm. It catalyses the reaction isopentenyl diphosphate = dimethylallyl diphosphate. It participates in isoprenoid biosynthesis; dimethylallyl diphosphate biosynthesis; dimethylallyl diphosphate from isopentenyl diphosphate: step 1/1. Catalyzes the 1,3-allylic rearrangement of the homoallylic substrate isopentenyl (IPP) to its highly electrophilic allylic isomer, dimethylallyl diphosphate (DMAPP). The chain is Isopentenyl-diphosphate Delta-isomerase 1 from Photorhabdus laumondii subsp. laumondii (strain DSM 15139 / CIP 105565 / TT01) (Photorhabdus luminescens subsp. laumondii).